A 248-amino-acid chain; its full sequence is 2,3-bisphosphoglycerate-dependent phosphoglycerate mutase (248 aa).

Residues 10–17, 23–24, Arg62, 89–92, Lys100, 116–117, and 183–184 contribute to the substrate site; these read RHGQSEWN, TG, ERHY, RR, and GN. His11 acts as the Tele-phosphohistidine intermediate in catalysis. Glu89 serves as the catalytic Proton donor/acceptor.

The protein belongs to the phosphoglycerate mutase family. BPG-dependent PGAM subfamily.

It carries out the reaction (2R)-2-phosphoglycerate = (2R)-3-phosphoglycerate. Its pathway is carbohydrate degradation; glycolysis; pyruvate from D-glyceraldehyde 3-phosphate: step 3/5. Catalyzes the interconversion of 2-phosphoglycerate and 3-phosphoglycerate. In Corynebacterium diphtheriae (strain ATCC 700971 / NCTC 13129 / Biotype gravis), this protein is 2,3-bisphosphoglycerate-dependent phosphoglycerate mutase.